The primary structure comprises 123 residues: Iron-sulfur cluster insertion protein ErpA (123 aa).

Residues cysteine 51, cysteine 115, and cysteine 117 each contribute to the iron-sulfur cluster site.

Belongs to the HesB/IscA family. In terms of assembly, homodimer. Requires iron-sulfur cluster as cofactor.

Its function is as follows. Required for insertion of 4Fe-4S clusters for at least IspG. The sequence is that of Iron-sulfur cluster insertion protein ErpA from Halorhodospira halophila (strain DSM 244 / SL1) (Ectothiorhodospira halophila (strain DSM 244 / SL1)).